Consider the following 316-residue polypeptide: DNA-directed RNA polymerase subunit alpha (316 aa).

An alpha N-terminal domain (alpha-NTD) region spans residues 1-229; the sequence is MLEMEKPRID…EYLKLFTEID (229 aa). Residues 246 to 316 are alpha C-terminal domain (alpha-CTD); that stretch reads KDKILEMSIE…LNLSFRKSED (71 aa).

It belongs to the RNA polymerase alpha chain family. In terms of assembly, homodimer. The RNAP catalytic core consists of 2 alpha, 1 beta, 1 beta' and 1 omega subunit. When a sigma factor is associated with the core the holoenzyme is formed, which can initiate transcription.

The catalysed reaction is RNA(n) + a ribonucleoside 5'-triphosphate = RNA(n+1) + diphosphate. Functionally, DNA-dependent RNA polymerase catalyzes the transcription of DNA into RNA using the four ribonucleoside triphosphates as substrates. The protein is DNA-directed RNA polymerase subunit alpha of Syntrophomonas wolfei subsp. wolfei (strain DSM 2245B / Goettingen).